We begin with the raw amino-acid sequence, 396 residues long: Probable sugar efflux transporter (396 aa).

The next 12 helical transmembrane spans lie at 15–35, 50–70, 81–101, 103–123, 136–156, 170–190, 209–229, 246–266, 275–295, 299–319, 333–353, and 364–384; these read VVTL…PVGL, VGIM…PFML, LICL…SWSF, VLVI…SITA, AQAL…GLPL, FFAI…LLPL, PALM…YTAY, FATA…VIFG, ALVS…LPAA, IHLG…GLGM, VAMA…ALVG, and MIGY…IIIF.

This sequence belongs to the major facilitator superfamily. SotB (TC 2.A.1.2) family.

It localises to the cell inner membrane. Its function is as follows. Involved in the efflux of sugars. The physiological role may be the reduction of the intracellular concentration of toxic sugars or sugar metabolites. This chain is Probable sugar efflux transporter, found in Escherichia coli O17:K52:H18 (strain UMN026 / ExPEC).